We begin with the raw amino-acid sequence, 292 residues long: Elongation factor Ts (292 aa).

The interval 80–83 is involved in Mg(2+) ion dislocation from EF-Tu; that stretch reads TDFV.

Belongs to the EF-Ts family.

The protein localises to the cytoplasm. Associates with the EF-Tu.GDP complex and induces the exchange of GDP to GTP. It remains bound to the aminoacyl-tRNA.EF-Tu.GTP complex up to the GTP hydrolysis stage on the ribosome. The polypeptide is Elongation factor Ts (Cupriavidus necator (strain ATCC 17699 / DSM 428 / KCTC 22496 / NCIMB 10442 / H16 / Stanier 337) (Ralstonia eutropha)).